A 451-amino-acid chain; its full sequence is Phosphoglucosamine mutase (451 aa).

The Phosphoserine intermediate role is filled by Ser102. Ser102, Asp242, Asp244, and Asp246 together coordinate Mg(2+). Position 102 is a phosphoserine (Ser102).

This sequence belongs to the phosphohexose mutase family. It depends on Mg(2+) as a cofactor. In terms of processing, activated by phosphorylation.

The enzyme catalyses alpha-D-glucosamine 1-phosphate = D-glucosamine 6-phosphate. Its function is as follows. Catalyzes the conversion of glucosamine-6-phosphate to glucosamine-1-phosphate. The protein is Phosphoglucosamine mutase of Staphylococcus epidermidis (strain ATCC 35984 / DSM 28319 / BCRC 17069 / CCUG 31568 / BM 3577 / RP62A).